A 206-amino-acid chain; its full sequence is Large ribosomal subunit protein uL4 (206 aa).

The protein belongs to the universal ribosomal protein uL4 family. Part of the 50S ribosomal subunit.

Its function is as follows. One of the primary rRNA binding proteins, this protein initially binds near the 5'-end of the 23S rRNA. It is important during the early stages of 50S assembly. It makes multiple contacts with different domains of the 23S rRNA in the assembled 50S subunit and ribosome. In terms of biological role, forms part of the polypeptide exit tunnel. In Rhodopseudomonas palustris (strain BisB5), this protein is Large ribosomal subunit protein uL4.